Consider the following 296-residue polypeptide: Fructose-bisphosphate aldolase class 1 (296 aa).

The active-site Proton acceptor is E175. The active-site Schiff-base intermediate with dihydroxyacetone-P is K212.

Belongs to the class I fructose-bisphosphate aldolase family.

It carries out the reaction beta-D-fructose 1,6-bisphosphate = D-glyceraldehyde 3-phosphate + dihydroxyacetone phosphate. It functions in the pathway carbohydrate degradation; glycolysis; D-glyceraldehyde 3-phosphate and glycerone phosphate from D-glucose: step 4/4. This is Fructose-bisphosphate aldolase class 1 from Staphylococcus haemolyticus (strain JCSC1435).